Reading from the N-terminus, the 396-residue chain is Elongation factor Tu (396 aa).

The tr-type G domain occupies 10–206; sequence KPHVNVGTIG…ALDTYIPTPE (197 aa). Residues 19–26 are G1; that stretch reads GHVDHGKT. 19 to 26 contacts GTP; it reads GHVDHGKT. T26 provides a ligand contact to Mg(2+). A G2 region spans residues 60–64; sequence GITIN. The G3 stretch occupies residues 81 to 84; sequence DCPG. GTP-binding positions include 81–85 and 136–139; these read DCPGH and NKCD. The tract at residues 136-139 is G4; sequence NKCD. Positions 174–176 are G5; the sequence is SAK.

Belongs to the TRAFAC class translation factor GTPase superfamily. Classic translation factor GTPase family. EF-Tu/EF-1A subfamily. As to quaternary structure, monomer.

The protein localises to the cytoplasm. The catalysed reaction is GTP + H2O = GDP + phosphate + H(+). Functionally, GTP hydrolase that promotes the GTP-dependent binding of aminoacyl-tRNA to the A-site of ribosomes during protein biosynthesis. This is Elongation factor Tu from Thiomonas delicata (Thiomonas cuprina).